The primary structure comprises 235 residues: Small ribosomal subunit protein uS2 (235 aa).

Belongs to the universal ribosomal protein uS2 family.

The chain is Small ribosomal subunit protein uS2 from Geobacillus thermodenitrificans (strain NG80-2).